The chain runs to 196 residues: Holliday junction branch migration complex subunit RuvA (196 aa).

The domain I stretch occupies residues 1 to 63 (MINKIYGKIV…DDDVKLFGFL (63 aa)). The segment at 64 to 142 (NISEREVFEN…KGDESSSYML (79 aa)) is domain II. Position 143 (lysine 143) is a region of interest, flexible linker. The interval 143–196 (KFKELEQSIVNMGFDRKLVVVAFREIMLSDKFLILKEAEQEQFLFTETLKRLSV) is domain III.

This sequence belongs to the RuvA family. Homotetramer. Forms an RuvA(8)-RuvB(12)-Holliday junction (HJ) complex. HJ DNA is sandwiched between 2 RuvA tetramers; dsDNA enters through RuvA and exits via RuvB. An RuvB hexamer assembles on each DNA strand where it exits the tetramer. Each RuvB hexamer is contacted by two RuvA subunits (via domain III) on 2 adjacent RuvB subunits; this complex drives branch migration. In the full resolvosome a probable DNA-RuvA(4)-RuvB(12)-RuvC(2) complex forms which resolves the HJ.

Its subcellular location is the cytoplasm. Its function is as follows. The RuvA-RuvB-RuvC complex processes Holliday junction (HJ) DNA during genetic recombination and DNA repair, while the RuvA-RuvB complex plays an important role in the rescue of blocked DNA replication forks via replication fork reversal (RFR). RuvA specifically binds to HJ cruciform DNA, conferring on it an open structure. The RuvB hexamer acts as an ATP-dependent pump, pulling dsDNA into and through the RuvAB complex. HJ branch migration allows RuvC to scan DNA until it finds its consensus sequence, where it cleaves and resolves the cruciform DNA. This chain is Holliday junction branch migration complex subunit RuvA, found in Borrelia recurrentis (strain A1).